The primary structure comprises 375 residues: Probable pectin lyase C (375 aa).

Positions 1–20 (MKITSTIPAVLLGLAPLSAA) are cleaved as a signal peptide. Disulfide bonds link Cys83–Cys100 and Cys92–Cys220. Residue Arg250 is part of the active site. A disulfide bridge connects residues Cys317 and Cys325.

Belongs to the polysaccharide lyase 1 family.

It localises to the secreted. It catalyses the reaction Eliminative cleavage of (1-&gt;4)-alpha-D-galacturonan methyl ester to give oligosaccharides with 4-deoxy-6-O-methyl-alpha-D-galact-4-enuronosyl groups at their non-reducing ends.. In terms of biological role, pectinolytic enzymes consist of four classes of enzymes: pectin lyase, polygalacturonase, pectin methylesterase and rhamnogalacturonase. Among pectinolytic enzymes, pectin lyase is the most important in depolymerization of pectin, since it cleaves internal glycosidic bonds of highly methylated pectins. This Aspergillus oryzae (strain ATCC 42149 / RIB 40) (Yellow koji mold) protein is Probable pectin lyase C (pelC).